Here is a 104-residue protein sequence, read N- to C-terminus: L-rhamnose mutarotase (104 aa).

Residue Tyr18 participates in substrate binding. His22 (proton donor) is an active-site residue. Residues Tyr41 and 76 to 77 (WW) each bind substrate.

The protein belongs to the rhamnose mutarotase family. Homodimer.

It is found in the cytoplasm. It carries out the reaction alpha-L-rhamnose = beta-L-rhamnose. The protein operates within carbohydrate metabolism; L-rhamnose metabolism. Involved in the anomeric conversion of L-rhamnose. This chain is L-rhamnose mutarotase, found in Burkholderia ambifaria (strain ATCC BAA-244 / DSM 16087 / CCUG 44356 / LMG 19182 / AMMD) (Burkholderia cepacia (strain AMMD)).